Here is a 117-residue protein sequence, read N- to C-terminus: Large ribosomal subunit protein bL20c (117 aa).

This sequence belongs to the bacterial ribosomal protein bL20 family.

The protein resides in the plastid. The protein localises to the chloroplast. Binds directly to 23S ribosomal RNA and is necessary for the in vitro assembly process of the 50S ribosomal subunit. It is not involved in the protein synthesizing functions of that subunit. In Citrus sinensis (Sweet orange), this protein is Large ribosomal subunit protein bL20c.